The following is a 699-amino-acid chain: Receptor-type tyrosine-protein phosphatase epsilon (699 aa).

The signal sequence occupies residues 1–19 (MEPFCPLLLASFSLSLARA). Residues 20–36 (GQGNDTTPTESNWTSTT) show a composition bias toward low complexity. A disordered region spans residues 20–40 (GQGNDTTPTESNWTSTTAGPP). The Extracellular portion of the chain corresponds to 20–45 (GQGNDTTPTESNWTSTTAGPPDPGAS). 2 N-linked (GlcNAc...) asparagine glycosylation sites follow: Asn23 and Asn31. Residues 46 to 68 (QPLLTWLLLPLLLLLFLLAAYFF) form a helical membrane-spanning segment. Topologically, residues 69 to 699 (RFRKQRKAVV…DIFSDYANFK (631 aa)) are cytoplasmic. Tyrosine-protein phosphatase domains follow at residues 134–393 (FREE…LLEY) and 425–688 (LEEE…VQDF). Substrate is bound by residues Asp302, 334-340 (CSAGVGR), and Gln378. Cys334 serves as the catalytic Phosphocysteine intermediate. Residue Cys629 is the Phosphocysteine intermediate of the active site. Tyr695 is modified (phosphotyrosine).

It belongs to the protein-tyrosine phosphatase family. Receptor class 4 subfamily. Monomer. Isoform 2: Homodimer. Can form oligomers. Dimerization is increased by oxidative stress and decreased by EGFR. Isoform 2 interacts with GRB2. A catalytically active cytoplasmic form (p65) is produced by proteolytic cleavage of either isoform 1, isoform 2 or isoform 3. Post-translationally, phosphorylated on tyrosine residues by tyrosine kinase Neu. In terms of processing, glycosylated. Isoform 2 is expressed in the spleen and thymus (at protein level). Detected in fibroblasts, myeloid cells, macrophages, and T-cells but not in B-cell lines. Isoform 1 and isoform 2 are expressed predominantly in the brain, testes, and lungs, with lower levels present in lymph nodes, thymus, spleen, heart and mammary glands. Isoform 1 is expressed in osteoclasts and not in osteoblasts and its expression is related to osteoclast differentiation. It is also expressed in the erythrocytes. Isoform 2 is strongly expressed in skeletal muscle and L6 skeletal muscle cell line.

Its subcellular location is the cell membrane. The protein localises to the cytoplasm. The catalysed reaction is O-phospho-L-tyrosyl-[protein] + H2O = L-tyrosyl-[protein] + phosphate. With respect to regulation, inhibited by alendronate (ALN), orthovanadate, and phenylarsine oxide (PAO). Functionally, acts as a negative regulator of insulin receptor (IR) signaling and is involved in insulin-induced glucose metabolism mainly through direct dephosphorylation and inactivation of IR in hepatocytes and liver. Plays a critical role in signaling transduction pathways and phosphoprotein network topology in red blood cells. May play a role in osteoclast formation and function. Acts as a negative regulator of insulin receptor (IR) signaling in skeletal muscle. Regulates insulin-induced tyrosine phosphorylation of insulin receptor (IR) and insulin receptor substrate 1 (IRS-1), phosphorylation of protein kinase B and glycogen synthase kinase-3 and insulin induced stimulation of glucose uptake. In terms of biological role, isoform 1 and isoform 2 act as a negative regulator of FceRI-mediated signal transduction leading to cytokine production and degranulation, most likely by acting at the level of SYK to affect downstream events such as phosphorylation of SLP76 and LAT and mobilization of Ca(2+). The polypeptide is Receptor-type tyrosine-protein phosphatase epsilon (Ptpre) (Mus musculus (Mouse)).